The primary structure comprises 181 residues: SRP-independent targeting protein 2 (181 aa).

The Cytoplasmic segment spans residues 1 to 15 (MAGKAGRKQASSNAK). Residues 16–36 (IIQGLYKQVSLFLGMAIVRLF) form a helical membrane-spanning segment. Topologically, residues 37–45 (ISRKVTIGQ) are lumenal. Residues 46-66 (WIKLVALNVPMFVALYIIVLS) form a helical membrane-spanning segment. Topologically, residues 67-89 (GKPKYDGNRVVKQGIDLNDNTNL) are cytoplasmic. A helical transmembrane segment spans residues 90–110 (ISYFFDLIYLSLFGNIGIIAF). Residues 111-112 (RT) lie on the Lumenal side of the membrane. Residues 113 to 133 (FKFWWCLLLCPIYAGYKLYGL) traverse the membrane as a helical segment. Topologically, residues 134 to 181 (KNMFMPGAQQTQADNRSKNANEGQSKSKRQMKRERRGETDSKIKYKYR) are cytoplasmic. Polar residues predominate over residues 144 to 157 (TQADNRSKNANEGQ). Residues 144 to 181 (TQADNRSKNANEGQSKSKRQMKRERRGETDSKIKYKYR) form a disordered region. The segment covering 168–181 (RRGETDSKIKYKYR) has biased composition (basic and acidic residues).

This sequence belongs to the TMEM208 family. Interacts with SND1, PHO88/SND3 and the translocon complex subunit SEC61. ENV10/SND2 and PHO88/SND3 form a complex with the translocon in the endoplasmic reticulum membrane.

It is found in the endoplasmic reticulum membrane. Functions in the SND pathway, a SRP (signal recognition particle) and GET (guided entry of tail-anchored proteins) independent pathway for targeting a broad range of substrate proteins to the endoplasmic reticulum. SND functions in parallel to GET in targeting proteins with downstream hydrophobic motifs. Involved in vacuolar processing and morphology. The polypeptide is SRP-independent targeting protein 2 (Saccharomyces cerevisiae (strain ATCC 204508 / S288c) (Baker's yeast)).